We begin with the raw amino-acid sequence, 173 residues long: uncharacterized protein (173 aa).

The first 20 residues, 1-20 (MWYKVLGIVSLCSVYVSTQG), serve as a signal peptide directing secretion. N53 carries an N-linked (GlcNAc...) asparagine glycan.

As to expression, component of the acid-insoluble organic matrix of calcified shell layers (at protein level).

Its subcellular location is the secreted. This is an uncharacterized protein from Haliotis asinina (Donkey's ear abalone).